We begin with the raw amino-acid sequence, 283 residues long: Nucleoid occlusion protein (283 aa).

Residues 1–21 (MKHSFSRFFGFGEKEEEPEIA) form a disordered region. Positions 148–167 (EALAQRLGKGQSTIANKLRL) form a DNA-binding region, H-T-H motif.

This sequence belongs to the ParB family.

Its subcellular location is the cytoplasm. It is found in the nucleoid. In terms of biological role, effects nucleoid occlusion by binding relatively nonspecifically to DNA and preventing the assembly of the division machinery in the vicinity of the nucleoid, especially under conditions that disturb the cell cycle. It helps to coordinate cell division and chromosome segregation by preventing the formation of the Z ring through the nucleoid, which would cause chromosome breakage. This Bacillus velezensis (strain DSM 23117 / BGSC 10A6 / LMG 26770 / FZB42) (Bacillus amyloliquefaciens subsp. plantarum) protein is Nucleoid occlusion protein.